A 316-amino-acid chain; its full sequence is Olfactory receptor 2G6 (316 aa).

The Extracellular segment spans residues 1-25 (MEETNNSSEKGFLLLGFSDQPQLER). Residues asparagine 5 and asparagine 6 are each glycosylated (N-linked (GlcNAc...) asparagine). A helical membrane pass occupies residues 26–49 (FLFAIILYFYVLSLLGNTALILVC). Residues 50–57 (CLDSRLHT) are Cytoplasmic-facing. The helical transmembrane segment at 58 to 79 (PMYFFLSNLSCVDICFTTSVAP) threads the bilayer. The Extracellular portion of the chain corresponds to 80–100 (QLLVTMNKKDKTMSYGGCVAQ). Residues cysteine 97 and cysteine 189 are joined by a disulfide bond. The helical transmembrane segment at 101–120 (LYVAMGLGSSECILLAVMAY) threads the bilayer. Over 121–139 (DRYAAVCRPLRYIAIMHPR) the chain is Cytoplasmic. The helical transmembrane segment at 140 to 158 (FCASLAGGAWLSGLITSLI) threads the bilayer. Residues 159–195 (QCSLTVQLPLCGHRTLDHIFCEVPVLIKLACVDTTFN) lie on the Extracellular side of the membrane. The helical transmembrane segment at 196 to 219 (EAELFVASVVFLIVPVLLILVSYG) threads the bilayer. Residues 220–236 (FITQAVLRIKSAAGRQK) lie on the Cytoplasmic side of the membrane. Residues 237–259 (AFGTCSSHLVVVIIFYGTIIFMY) form a helical membrane-spanning segment. Over 260 to 272 (LQPANRRSKNQGK) the chain is Extracellular. A helical transmembrane segment spans residues 273–292 (FVSLFYTIVTPLLNPIIYTL). Topologically, residues 293 to 316 (RNKDVKGALRTLILGSAAGQSHKD) are cytoplasmic.

It belongs to the G-protein coupled receptor 1 family.

Its subcellular location is the cell membrane. Odorant receptor. In Homo sapiens (Human), this protein is Olfactory receptor 2G6 (OR2G6).